Consider the following 1361-residue polypeptide: DNA-directed RNA polymerase subunit beta (1361 aa).

Belongs to the RNA polymerase beta chain family. The RNAP catalytic core consists of 2 alpha, 1 beta, 1 beta' and 1 omega subunit. When a sigma factor is associated with the core the holoenzyme is formed, which can initiate transcription.

The catalysed reaction is RNA(n) + a ribonucleoside 5'-triphosphate = RNA(n+1) + diphosphate. In terms of biological role, DNA-dependent RNA polymerase catalyzes the transcription of DNA into RNA using the four ribonucleoside triphosphates as substrates. The protein is DNA-directed RNA polymerase subunit beta of Cellvibrio japonicus (strain Ueda107) (Pseudomonas fluorescens subsp. cellulosa).